A 596-amino-acid chain; its full sequence is Glomulin (596 aa).

Residue alanine 2 is modified to N-acetylalanine. The tract at residues 2 to 555 (AVEELQSIIK…EEIPSMPPEM (554 aa)) is alpha-helical region with structural similarity to HEAT repeats. The important for interaction with RBX1 stretch occupies residues 299–596 (IDQLPMVLSP…STSEENVGIK (298 aa)).

In terms of assembly, interacts with FKBP4 and FKBP1A. Interacts with RBX1 (via RING domain). Identified in complexes that contain RBX1 plus one of the cullins CUL1, CUL2, CUL3, and CUL4A. Identified in a SCF complex composed of CUL1, RBX1, SKP1, FBXW7 and GLMN. Component of a SCF-like complex consisting of CUL7, RBX1, SKP1, FBXW8 and GLMN. Interacts with unphosphorylated MET and is released upon MET phosphorylation. In terms of processing, phosphorylated on tyrosine residues. Ubiquitous. Detected in embryonic vasculature and embryonic perichondrium, and in adult eye, brain, heart, testis, kidney, smooth muscle and skeletal muscle.

Functionally, regulatory component of cullin-RING-based SCF (SKP1-Cullin-F-box protein) E3 ubiquitin-protein ligase complexes. Inhibits E3 ubiquitin ligase activity by binding to the RING domain of RBX1 and inhibiting its interaction with the E2 ubiquitin-conjugating enzyme CDC34. Inhibits RBX1-mediated neddylation of CUL1. Required for normal stability and normal cellular levels of key components of SCF ubiquitin ligase complexes, including FBXW7, RBX1, CUL1, CUL2, CUL3, CUL4A, and thereby contributes to the regulation of CCNE1 and MYC levels. Essential for normal development of the vasculature. Contributes to the regulation of RPS6KB1 phosphorylation. This chain is Glomulin (Glmn), found in Mus musculus (Mouse).